The sequence spans 131 residues: Holo-[acyl-carrier-protein] synthase (131 aa).

Mg(2+) contacts are provided by Asp-6 and Glu-55.

This sequence belongs to the P-Pant transferase superfamily. AcpS family. Requires Mg(2+) as cofactor.

The protein localises to the cytoplasm. The enzyme catalyses apo-[ACP] + CoA = holo-[ACP] + adenosine 3',5'-bisphosphate + H(+). Transfers the 4'-phosphopantetheine moiety from coenzyme A to a Ser of acyl-carrier-protein. The chain is Holo-[acyl-carrier-protein] synthase from Verminephrobacter eiseniae (strain EF01-2).